The chain runs to 272 residues: Putative G-protein coupled receptor GPR32P1 (272 aa).

Residues 1–24 form a disordered region; the sequence is MNGVSEGTRGCSDRQPGALTQGHS. The Extracellular segment spans residues 1–46; sequence MNGVSEGTRGCSDRQPGALTQGHSCSRKMNASRCLSEEVGSLRPLT. Asparagine 30 is a glycosylation site (N-linked (GlcNAc...) asparagine). Residues 47-67 form a helical membrane-spanning segment; that stretch reads MAVLSASFVVGVLGNGLVPWV. Residues 68–78 are Cytoplasmic-facing; it reads TVFRMARTVST. Residues 79–99 traverse the membrane as a helical segment; sequence VCFFHLALADFMLSLSLPILV. Topologically, residues 100–116 are extracellular; it reads YYIVSRQWLLGEWACKL. Cysteines 114 and 191 form a disulfide. A helical transmembrane segment spans residues 117-137; the sequence is YTGFVFLTFSTSNCLLVLISV. The Cytoplasmic segment spans residues 138-158; sequence DRCISVLYPVWALNHRTEQRA. The helical transmembrane segment at 159–179 threads the bilayer; that stretch reads SWLAFGVWLLAAALCSAHLKF. Topologically, residues 180–213 are extracellular; sequence RTTRKWNGCMQCYLQFNLENETAQMWTQEVFGRQ. A glycan (N-linked (GlcNAc...) asparagine) is linked at asparagine 199. Residues 214-234 traverse the membrane as a helical segment; sequence MAVIMAHFLLGFLGPLAIIGT. Over 235–272 the chain is Cytoplasmic; the sequence is CAHLIRAKLLREGWVHANRPKRLLLVLVSALSAGSHLT.

The protein belongs to the G-protein coupled receptor 1 family.

It localises to the cell membrane. Orphan receptor. The chain is Putative G-protein coupled receptor GPR32P1 (GPR32P1) from Homo sapiens (Human).